The following is a 480-amino-acid chain: Pre-glycoprotein polyprotein GP complex (480 aa).

A lipid anchor (N-myristoyl glycine; by host) is attached at glycine 2. Topologically, residues 2 to 17 (GQLVSFFQEIPVFFQE) are extracellular. The chain crosses the membrane as a helical span at residues 18 to 33 (ALNIALAVVTLLAIVK). The Cytoplasmic portion of the chain corresponds to 34 to 58 (GVLNLWKSGLFQLLMFLILAGRSCS). Cysteine 57 contributes to the Zn(2+) binding site. Topologically, residues 59–419 (FRIGYHTSFE…QGRTPLTLVD (361 aa)) are extracellular. Disulfide bonds link cysteine 85–cysteine 221, cysteine 266–cysteine 279, cysteine 288–cysteine 297, and cysteine 351–cysteine 372. 3 N-linked (GlcNAc...) asparagine; by host glycosylation sites follow: asparagine 88, asparagine 174, and asparagine 214. N-linked (GlcNAc...) asparagine; by host glycosylation is found at asparagine 352, asparagine 360, asparagine 377, and asparagine 382. Residues 420–440 (LCFWSAVFYTTTLFLHLVGFP) traverse the membrane as a helical segment. Topologically, residues 441 to 480 (THRHISGEPCPLPHRLNRHGACNCGRFKRLKKPLVWYKHH) are cytoplasmic. The Zn(2+) site is built by histidine 442, histidine 444, cysteine 450, histidine 454, cysteine 462, cysteine 464, and histidine 480.

The protein belongs to the arenaviridae GPC protein family. Interacts with glycoprotein G2. Part of the GP complex (GP-C) together with glycoprotein G1 and glycoprotein G2. The GP-complex interacts with protein Z, which interacts with ribonucleocapsid; these interactions may induce virion budding. In terms of assembly, homotrimer; disulfide-linked. In pre-fusion state, G1 homotrimers bind G2 homotrimers via ionic interactions. Part of the GP complex (GP-C) together with glycoprotein G2 and the stable signal peptide. The GP-complex interacts with protein Z, which interacts with ribonucleocapsid; these interactions may induce virion budding. As to quaternary structure, homotrimer. Interacts with the stable signal peptide. In pre-fusion state, G2 homotrimers bind G1 homotrimers via ionic interactions. Part of the GP complex (GP-C) together with glycoprotein G1 and the stable signal peptide. Acidification in the endosome triggers rearrangements, which ultimately leads to a 6 helix bundle formed by the two heptad repeat domains (HR1 and HR2) in post-fusion state. The GP-complex interacts with protein Z, which interacts with ribonucleocapsid; these interactions may induce virion budding. Specific enzymatic cleavages in vivo yield mature proteins. GP-C polyprotein is cleaved in the endoplasmic reticulum by the host protease MBTPS1. Only cleaved glycoprotein is incorporated into virions. In terms of processing, the SSP remains stably associated with the GP complex following cleavage by signal peptidase and plays crucial roles in the trafficking of GP through the secretory pathway. Post-translationally, myristoylation is necessary for GP2-mediated fusion activity.

It is found in the virion membrane. It localises to the host endoplasmic reticulum membrane. Its subcellular location is the host Golgi apparatus membrane. The protein localises to the host cell membrane. In terms of biological role, functions as a cleaved signal peptide that is retained as the third component of the GP complex (GP-C). Helps to stabilize the spike complex in its native conformation. The SSP is required for efficient glycoprotein expression, post-translational maturation cleavage of G1 and G2, glycoprotein transport to the cell surface plasma membrane, formation of infectious virus particles, and acid pH-dependent glycoprotein-mediated cell fusion. Its function is as follows. Forms the virion spikes together with glycoprotein G2. The glycoprotein spike trimers are connected to the underlying matrix. Interacts with the host receptor leading to virus endocytosis. Forms the virion spikes together with glycoprotein G1. The glycoprotein spike trimers are connected to the underlying matrix. Class I viral fusion protein that directs fusion of viral and host endosomal membranes, leading to delivery of the nucleocapsid into the cytoplasm. Membrane fusion is mediated by irreversible conformational changes induced by acidification. The sequence is that of Pre-glycoprotein polyprotein GP complex from Cupixi mammarenavirus (isolate Rat/Brasil/BeAn 119303/1970) (CPXV).